A 161-amino-acid chain; its full sequence is S-ribosylhomocysteine lyase (161 aa).

Residues His58, His62, and Cys128 each contribute to the Fe cation site.

The protein belongs to the LuxS family. Homodimer. The cofactor is Fe cation.

It catalyses the reaction S-(5-deoxy-D-ribos-5-yl)-L-homocysteine = (S)-4,5-dihydroxypentane-2,3-dione + L-homocysteine. Functionally, involved in the synthesis of autoinducer 2 (AI-2) which is secreted by bacteria and is used to communicate both the cell density and the metabolic potential of the environment. The regulation of gene expression in response to changes in cell density is called quorum sensing. Catalyzes the transformation of S-ribosylhomocysteine (RHC) to homocysteine (HC) and 4,5-dihydroxy-2,3-pentadione (DPD). This is S-ribosylhomocysteine lyase from Bifidobacterium adolescentis (strain ATCC 15703 / DSM 20083 / NCTC 11814 / E194a).